We begin with the raw amino-acid sequence, 76 residues long: Putative phosphotransferase enzyme IIA component YyzE (76 aa).

Residues 1 to 76 enclose the PTS EIIA type-1 domain; that stretch reads MVTPTKHAIG…LHQKIFTVVS (76 aa). The active-site Tele-phosphohistidine intermediate is the His-22.

It localises to the cytoplasm. Its function is as follows. The phosphoenolpyruvate-dependent sugar phosphotransferase system (PTS), a major carbohydrate active -transport system, catalyzes the phosphorylation of incoming sugar substrates concomitant with their translocation across the cell membrane. This is Putative phosphotransferase enzyme IIA component YyzE (yyzE) from Bacillus subtilis (strain 168).